A 114-amino-acid chain; its full sequence is Fumarate reductase subunit D (114 aa).

The next 3 helical transmembrane spans lie at 24 to 44, 50 to 70, and 92 to 112; these read VSAIFLPVVILIIGLLLPFGL, LITFAYSWIGKLVILVLTIFP, and GGFIFYGLATIYTVWVLFAVI.

It belongs to the FrdD family. In terms of assembly, part of an enzyme complex containing four subunits: a flavoprotein (FrdA), an iron-sulfur protein (FrdB), and two hydrophobic anchor proteins (FrdC and FrdD).

It is found in the cell inner membrane. In terms of biological role, anchors the catalytic components of the fumarate reductase complex to the cell membrane, binds quinones. This Haemophilus influenzae (strain PittGG) protein is Fumarate reductase subunit D.